Here is a 596-residue protein sequence, read N- to C-terminus: Invasin CotH7 (596 aa).

The first 17 residues, 1–17, serve as a signal peptide directing secretion; sequence MKSLSFISLACLTAVHA. N-linked (GlcNAc...) asparagine glycans are attached at residues N82, N146, N163, N169, N288, N440, and N544. Over residues 528 to 544 the composition is skewed to low complexity; sequence SATIAAPATSESASQDN. Residues 528 to 557 form a disordered region; it reads SATIAAPATSESASQDNTSDDTDSASTSSS. A lipid anchor (GPI-anchor amidated serine) is attached at S567. A propeptide spans 568-596 (removed in mature form); that stretch reads SASKSAPTFYCLQLVLYLSLSFKNLYKYI.

Interacts with host integrin beta-1 ITGB1 on the cell surface of host alveolar epithelial cells.

The protein resides in the cell membrane. Its function is as follows. Promotes invasion of host epithelial cells by adhering to receptors on the host cell surface to facilitate endocytosis of the pathogen into host cells. Probably binds integrin ITGA3:ITGB1 via ITGB1, on the cell surface of host alveolar epithelial cells. The chain is Invasin CotH7 from Rhizopus delemar (strain RA 99-880 / ATCC MYA-4621 / FGSC 9543 / NRRL 43880) (Mucormycosis agent).